The primary structure comprises 292 residues: CCR4-NOT transcription complex subunit 8 (292 aa).

Residues D40, E42, D161, and D230 each contribute to the a divalent metal cation site.

Belongs to the CAF1 family. In terms of assembly, component of the CCR4-NOT complex; distinct complexes seem to exist that differ in the participation of probably mutually exclusive catalytic subunits; the complex contains two deadenylase subunits, CNOT6 or CNOT6L, and CNOT7 or CNOT8. In the complex interacts directly with CNOT1. Interacts with BTG1, BTG2 and TOB1. Interacts with BTG4.

The protein localises to the cytoplasm. It localises to the nucleus. It carries out the reaction Exonucleolytic cleavage of poly(A) to 5'-AMP.. Has 3'-5' poly(A) exoribonuclease activity for synthetic poly(A) RNA substrate. Its function seems to be partially redundant with that of CNOT7. Catalytic component of the CCR4-NOT complex which is linked to various cellular processes including bulk mRNA degradation, miRNA-mediated repression, translational repression during translational initiation and general transcription regulation. During miRNA-mediated repression the complex also seems to act as translational repressor during translational initiation. Additional complex functions may be a consequence of its influence on mRNA expression. Associates with members of the BTG family such as TOB1 and BTG2 and is required for their anti-proliferative activity. In Mus musculus (Mouse), this protein is CCR4-NOT transcription complex subunit 8 (Cnot8).